The sequence spans 71 residues: Conotoxin Pl071 (71 aa).

Positions 1–20 (MSRLFMILLVICVITLGTDA) are cleaved as a signal peptide. The propeptide occupies 21–31 (SQAEDSGTEKR). Tyr-69 carries the tyrosine amide modification.

It belongs to the conotoxin NSf-1 superfamily. Expressed by the venom duct.

It is found in the secreted. Its function is as follows. Probable neurotoxin with unknown target. Possibly targets ion channels. This chain is Conotoxin Pl071, found in Conus planorbis (Planorbis cone).